A 515-amino-acid chain; its full sequence is Putative pumilio homolog 8, chloroplastic (515 aa).

The tract at residues 1–33 is disordered; that stretch reads MMRGEFGEASSLSRSPSSPLQTEPHPQSPKFYR. Residues 1–70 constitute a chloroplast transit peptide; the sequence is MMRGEFGEAS…LSSYFSNGLC (70 aa). Residues 10-20 are compositionally biased toward low complexity; that stretch reads SSLSRSPSSPL. A PUM-HD domain is found at 174 to 515; it reads SGVGALFDHQ…RIFSRNLLKN (342 aa). Pumilio repeat units lie at residues 198–233, 234–269, 270–308, 310–345, 346–381, 382–417, 418–456, and 457–490; these read EFQG…VIFS, EVIP…QIIL, MVTS…SLVK, ALRP…FIFE, DATK…KLVT, EISR…AMLA, QLKG…ELIS, and VPHF…TLVE.

Its subcellular location is the plastid. It localises to the chloroplast. The protein resides in the cytoplasm. Functionally, sequence-specific RNA-binding protein that regulates translation and mRNA stability by binding the 3'-UTR of target mRNAs. This chain is Putative pumilio homolog 8, chloroplastic (APUM8), found in Arabidopsis thaliana (Mouse-ear cress).